The sequence spans 349 residues: tRNA pseudouridine synthase D (349 aa).

Residue Phe27 participates in substrate binding. Asp80 acts as the Nucleophile in catalysis. Asn129 lines the substrate pocket. Positions 155–303 constitute a TRUD domain; sequence GVPNYFGAQR…VEAARRAMLL (149 aa). A substrate-binding site is contributed by Phe329.

Belongs to the pseudouridine synthase TruD family.

It catalyses the reaction uridine(13) in tRNA = pseudouridine(13) in tRNA. Functionally, responsible for synthesis of pseudouridine from uracil-13 in transfer RNAs. The chain is tRNA pseudouridine synthase D from Escherichia coli O7:K1 (strain IAI39 / ExPEC).